Reading from the N-terminus, the 313-residue chain is MSVIDTNQIDLAAPRISEAGVADYVALLKPRVMSLVVFTALVGMLLAPGDFHPVLAVTAMLCIAVGGGAAGALNMWYENDIDALMTRTANRPIPRGRVTRPEALTFGMTLSFFSVVTLGVLVNWIAAALLAFTIFFYVVIYTMWLKRSTAQNIVIGGAAGALPPVVAWAAVTGSLAVEPLLLFAIIFFWTPPHFWALALFRNDDYARAGVPMLPVVAGPDHTRLQILLYTIVLVAVAAAPWPLGYFDAVYGIASLALGGWMLVLAIRVYRHRSGSAALRATRNLFKFSILYLFALFSILLIEVVAKAVWQLFA.

The next 8 helical transmembrane spans lie at 32-52 (VMSL…GDFH), 53-73 (PVLA…AGAL), 120-140 (VLVN…YVVI), 153-173 (IVIG…AVTG), 180-200 (LLLF…LALF), 226-246 (ILLY…LGYF), 248-268 (AVYG…AIRV), and 284-304 (LFKF…IEVV).

It belongs to the UbiA prenyltransferase family. Protoheme IX farnesyltransferase subfamily.

It is found in the cell inner membrane. The catalysed reaction is heme b + (2E,6E)-farnesyl diphosphate + H2O = Fe(II)-heme o + diphosphate. Its pathway is porphyrin-containing compound metabolism; heme O biosynthesis; heme O from protoheme: step 1/1. In terms of biological role, converts heme B (protoheme IX) to heme O by substitution of the vinyl group on carbon 2 of heme B porphyrin ring with a hydroxyethyl farnesyl side group. In Rhodopseudomonas palustris (strain BisB5), this protein is Protoheme IX farnesyltransferase.